The sequence spans 135 residues: Membrane-anchored ubiquitin-fold protein 4 (135 aa).

A disordered region spans residues 1 to 20 (MAEKEEGKVAAEGGAEAEAD). A Ubiquitin-like domain is found at 23-92 (VEVKFRLFDG…NDKNIAQCRA (70 aa)). The residue at position 132 (Cys-132) is a Cysteine methyl ester. The S-geranylgeranyl cysteine moiety is linked to residue Cys-132. Positions 133-135 (TIL) are cleaved as a propeptide — removed in mature form.

It is found in the cell membrane. Functionally, may serve as docking site to facilitate the association of other proteins to the plasma membrane. The chain is Membrane-anchored ubiquitin-fold protein 4 (MUB4) from Oryza sativa subsp. japonica (Rice).